Reading from the N-terminus, the 226-residue chain is Phosphoglycolate phosphatase (226 aa).

Asp-9 (nucleophile) is an active-site residue. Residues Asp-9 and Asp-11 each coordinate Mg(2+). Lys-150 provides a ligand contact to substrate. 2 residues coordinate Mg(2+): Asp-173 and Asp-177.

This sequence belongs to the archaeal SPP-like hydrolase family. The cofactor is Mg(2+).

The enzyme catalyses 2-phosphoglycolate + H2O = glycolate + phosphate. Functionally, catalyzes the dephosphorylation of 2-phosphoglycolate. The chain is Phosphoglycolate phosphatase from Methanosarcina acetivorans (strain ATCC 35395 / DSM 2834 / JCM 12185 / C2A).